The sequence spans 122 residues: MIQTETVLNVADNSGAKKVLCIRVLGGSRKRYASIGDVIVVTVKEAIPHAKVKKGDVMKAVVVRTAKENRRPDDTWVKFDENAAVMLGASGEPVGTRIFGPVARELRNQGFMKIISLAPEVL.

It belongs to the universal ribosomal protein uL14 family. Part of the 50S ribosomal subunit. Forms a cluster with proteins L3 and L19. In the 70S ribosome, L14 and L19 interact and together make contacts with the 16S rRNA in bridges B5 and B8.

In terms of biological role, binds to 23S rRNA. Forms part of two intersubunit bridges in the 70S ribosome. This chain is Large ribosomal subunit protein uL14, found in Desulfotalea psychrophila (strain LSv54 / DSM 12343).